Reading from the N-terminus, the 41-residue chain is MKVVSSLKSLKNRDKSCQVVKRRGKIFVINKKNKKFKARQG.

Belongs to the bacterial ribosomal protein bL36 family.

The protein is Large ribosomal subunit protein bL36 of Orientia tsutsugamushi (strain Boryong) (Rickettsia tsutsugamushi).